Here is a 177-residue protein sequence, read N- to C-terminus: MSTKAWNASRLSGPDPSTPWSLKKPLQHGSRPPKGKRLTVCPPTRPKQTIRISASHASQQLDQAKAACLAVTIRDLEEATAVMRSWEHSLVTPQCIAPRYSIIMFMITAVKRLRESKMLTLSWFNQALMMVSKSGEEMRNLRTAMWILANLIPREVLPLTGDLLPSLQQQEPPMLKQ.

Polar residues predominate over residues 1 to 10; it reads MSTKAWNASR. Residues 1 to 37 are disordered; that stretch reads MSTKAWNASRLSGPDPSTPWSLKKPLQHGSRPPKGKR.

It belongs to the morbillivirus protein C family.

The chain is Protein C (P/V/C) from Bos indicus (Zebu).